Consider the following 263-residue polypeptide: Serine protease ami (263 aa).

Residues 1–21 (MNISRVLFAVVLVLTVSTYEC) form the signal peptide. The N-linked (GlcNAc...) asparagine glycan is linked to N2. Residues 22–26 (RPRGR) constitute a propeptide, activation peptide. Residues 27-254 (ILGGQDSKEK…YKSWIMETMY (228 aa)) enclose the Peptidase S1 domain. C52 and C68 are disulfide-bonded. Catalysis depends on H67, which acts as the Charge relay system. N-linked (GlcNAc...) asparagine glycans are attached at residues N73, N74, and N108. D115 acts as the Charge relay system in catalysis. Intrachain disulfides connect C149-C215, C180-C196, and C205-C230. S209 acts as the Charge relay system in catalysis. N-linked (GlcNAc...) asparagine glycosylation is present at N255.

The protein belongs to the peptidase S1 family. As to expression, in the embryo, localizes to paraxial regions at the neurula stage and anterior ventral regions at the tailbud stage. From the late tailbud to tadpole stage, expressed along the forming blood vessels including the anterior cardinal veins, posterior cardinal veins, intersomitic veins, dorsal longitudinal anastomosing vessel, dorsal aorta, pronephric sinus and most prominently around the vascular vitelline network, where expression shows left-right asymmetry in the stage 42 embryo. Localizes to endothelial cells. In adults, shows highest expression in liver with moderate levels of expression in the fat body, lung, gut and vessels. Weakly expressed in adult heart, muscle, testis and ovary.

It localises to the secreted. Probable serine protease. This is Serine protease ami from Xenopus laevis (African clawed frog).